The chain runs to 277 residues: Inositol monophosphatase 1 (277 aa).

Mg(2+) is bound by residues Glu-70, Asp-90, Ile-92, and Asp-93. Substrate-binding positions include Glu-70, 90 to 95 (DPIDGT), 194 to 196 (GTA), Glu-213, and Asp-220. Asp-220 provides a ligand contact to Mg(2+).

The protein belongs to the inositol monophosphatase superfamily. Homodimer. It depends on Mg(2+) as a cofactor. As to expression, mostly expressed in brain, small intestine, testis, kidney, and spleen (at protein level).

It is found in the cytoplasm. The enzyme catalyses a myo-inositol phosphate + H2O = myo-inositol + phosphate. It catalyses the reaction 1D-myo-inositol 1-phosphate + H2O = myo-inositol + phosphate. It carries out the reaction 1D-myo-inositol 2-phosphate + H2O = myo-inositol + phosphate. The catalysed reaction is 1D-myo-inositol 3-phosphate + H2O = myo-inositol + phosphate. The enzyme catalyses 1D-myo-inositol 4-phosphate + H2O = myo-inositol + phosphate. It catalyses the reaction 1D-myo-inositol 5-phosphate + H2O = myo-inositol + phosphate. It carries out the reaction 1D-myo-inositol 6-phosphate + H2O = myo-inositol + phosphate. The catalysed reaction is scyllo-inositol 1-phosphate + H2O = scyllo-inositol + phosphate. The enzyme catalyses alpha-D-galactose 1-phosphate + H2O = D-galactose + phosphate. It catalyses the reaction alpha-D-glucose 1-phosphate + H2O = D-glucose + phosphate. It carries out the reaction D-glucose 6-phosphate + H2O = D-glucose + phosphate. The catalysed reaction is beta-D-fructose 1-phosphate + H2O = D-fructose + phosphate. The enzyme catalyses glycerol 2-phosphate + H2O = glycerol + phosphate. It catalyses the reaction adenosine 2'-phosphate + H2O = adenosine + phosphate. It participates in polyol metabolism; myo-inositol biosynthesis; myo-inositol from D-glucose 6-phosphate: step 2/2. Its activity is regulated as follows. Inhibited by Li(+), Ca(2+) and Mn(2+), but also by Mg(2+) at concentrations above 3 mM. Phosphatase involved in the dephosphorylation of myo-inositol monophosphate to generate myo-inositol. Is also able to dephosphorylate scyllo-inositol-phosphate, myo-inositol 1,4-diphosphate, scyllo-inositol-1,3-diphosphate and scyllo-inositol-1,4-diphosphate. Also dephosphorylates in vitro other sugar-phosphates including D-galactose-1-phosphate, glucose-1-phosphate, glucose-6-phosphate, fructose-1-phosphate, beta-glycerophosphate and 2'-AMP. Responsible for the provision of inositol required for synthesis of phosphatidylinositol and polyphosphoinositides, and involved in maintaining normal brain function. Has been implicated as the pharmacological target for lithium Li(+) action in brain. The polypeptide is Inositol monophosphatase 1 (Impa1) (Mus musculus (Mouse)).